The following is a 947-amino-acid chain: Protein RRC1-like (947 aa).

Basic and acidic residues predominate over residues 1–11; the sequence is MVKDEFFLDHP. Disordered stretches follow at residues 1-35 and 63-167; these read MVKDEFFLDHPGRKHRSRNTEKKKKPRRRERRMKQ and PNDN…DELP. Positions 12–34 are enriched in basic residues; the sequence is GRKHRSRNTEKKKKPRRRERRMK. Basic and acidic residues-rich tracts occupy residues 66–84 and 104–155; these read NKLKPDSQGEKSRDGDSIS and KGPE…DHNS. The RRM domain maps to 187–268; it reads TNLYVVNLSS…YELKIGWGKV (82 aa). The stretch at 336–379 is one SURP motif repeat; the sequence is IIDTMALNVLDGGCAFEQAIMERGRGNPLFNFLFELGSKEHTYY. The disordered stretch occupies residues 412 to 434; sequence PPLPATRSPEHGKESRGTYAAGK. One can recognise a CID domain in the interval 444–589; the sequence is LTDSQRDEFE…GLRATFLRSR (146 aa). The 35-residue stretch at 638-672 folds into the SAP domain; that stretch reads LMNRPISELERRCRHNGLSLLGGREMMVARLVCLK. Disordered stretches follow at residues 752 to 797 and 846 to 947; these read REDD…PENE and GLSG…RGMR. Basic and acidic residues-rich tracts occupy residues 854–876, 888–916, and 924–947; these read LPEKREKREDSRDSSRKRNRSES, LTRERVRDHDLDKDRHRDRDRQQHDLDKD, and SSRERDDHDRSRERDRDWRRRGMR.

As to expression, expressed in leaves, inflorescence stems, roots, flower buds, open flowers and siliques.

Probable SR-like splicing factor. The protein is Protein RRC1-like of Arabidopsis thaliana (Mouse-ear cress).